Reading from the N-terminus, the 213-residue chain is Large ribosomal subunit protein uL1 (213 aa).

The protein belongs to the universal ribosomal protein uL1 family. As to quaternary structure, part of the 50S ribosomal subunit.

Binds directly to 23S rRNA. Probably involved in E site tRNA release. Functionally, protein L1 is also a translational repressor protein, it controls the translation of its operon by binding to its mRNA. The protein is Large ribosomal subunit protein uL1 of Methanoculleus marisnigri (strain ATCC 35101 / DSM 1498 / JR1).